Here is a 337-residue protein sequence, read N- to C-terminus: Serpentine receptor class alpha-17 (337 aa).

6 helical membrane-spanning segments follow: residues 28-48, 110-130, 155-175, 197-217, 247-267, and 282-302; these read LNFVFIATVIFLSFYFAGLAI, ELYFYYLTNYFSTYAVFSLTF, IIQLLLSLSTYYVGLYGVPLV, FRTATMVFCIIVTIFIYYLSV, CILIVLQFACIMLSSFGVNYI, and IAPFFPGVTYASLCLPLVIYF.

Belongs to the nematode receptor-like protein sra family.

The protein localises to the membrane. This Caenorhabditis elegans protein is Serpentine receptor class alpha-17 (sra-17).